Here is a 643-residue protein sequence, read N- to C-terminus: Macrolide export ATP-binding/permease protein MacB (643 aa).

Residues 6–244 form the ABC transporter domain; it reads IELKGVSRVF…QVRSPFGVRH (239 aa). Residue 42–49 participates in ATP binding; that stretch reads GASGSGKS. A run of 4 helical transmembrane segments spans residues 270–290, 518–538, 569–589, and 606–626; these read VLTLLGIVIGVASVIVMLAIG, LTILLGSIAAISLLVGGIGVM, FLIEAVVVSALGGLIGVVIGL, and LMPIVWAFGCAFVTGLLFGYL.

Belongs to the ABC transporter superfamily. Macrolide exporter (TC 3.A.1.122) family. Homodimer.

Its subcellular location is the cell inner membrane. Its function is as follows. Non-canonical ABC transporter that contains transmembrane domains (TMD), which form a pore in the inner membrane, and an ATP-binding domain (NBD), which is responsible for energy generation. Confers resistance against macrolides. This is Macrolide export ATP-binding/permease protein MacB from Wolinella succinogenes (strain ATCC 29543 / DSM 1740 / CCUG 13145 / JCM 31913 / LMG 7466 / NCTC 11488 / FDC 602W) (Vibrio succinogenes).